The sequence spans 267 residues: Short chain dehydrogenase claC (267 aa).

NADP(+) contacts are provided by isoleucine 27, aspartate 73, asparagine 100, and arginine 133. Catalysis depends on proton donor residues serine 149 and serine 150. The NADP(+) site is built by tyrosine 164, lysine 168, and threonine 199. The active-site Proton acceptor is the tyrosine 164. Lysine 168 serves as the catalytic Lowers pKa of active site Tyr.

This sequence belongs to the short-chain dehydrogenases/reductases (SDR) family.

Its pathway is pigment biosynthesis. In terms of biological role, non-reducing polyketide synthase; part of the gene cluster that mediates the biosynthesis of the bianthraquinone cladofulvin, a conidial pigment not required for virulence but that plays a role in fitness and resistance to environmental stresses including UV light and low-temperature stress. The pathway begins with the synthesis of atrochrysone thioester by the polyketide synthase (PKS) claG. The atrochrysone carboxyl ACP thioesterase claF then breaks the thioester bond and releases the atrochrysone carboxylic acid from claG. This compound is decarboxylated by claH to yield emodin, which is further converted to chrysophanol hydroquinone by the reductase claC and the dehydratase claB. The cytochrome monooxygenase P450 claM then catalyzes the dimerization of nataloe-emodin to cladofulvin. This is Short chain dehydrogenase claC from Passalora fulva (Tomato leaf mold).